We begin with the raw amino-acid sequence, 495 residues long: Cornulin (495 aa).

One can recognise an EF-hand domain in the interval 49 to 84 (HDPATVDEVLRLLDEDHTGTVEFKEFLVLVFKVAQA). Ca(2+) contacts are provided by aspartate 62, aspartate 64, threonine 66, threonine 68, and glutamate 73. Disordered stretches follow at residues 96–439 (ACGS…TVVG) and 460–481 (LHTS…KRGI). Residues 99 to 110 (SQESGSLHSGAS) show a composition bias toward polar residues. Over residues 137-151 (HRQSQQGSRGQNRPG) the composition is skewed to low complexity. The span at 152–194 (VQTQGQATGSAWVSSYDRQAESQSQERISPQIQLSGQTEQTQK) shows a compositional bias: polar residues. Residues 196–222 (GEGKRNQTTEMRPERQPQTREQDRAHQ) show a composition bias toward basic and acidic residues. Positions 226 to 242 (TVTGSGTQTQAGATQTV) are enriched in low complexity. 2 stretches are compositionally biased toward polar residues: residues 243–282 (EQDS…SQAV) and 290–303 (QAGT…QTVE). The span at 307–324 (SHQTGSTSTQTQESTNGQ) shows a compositional bias: low complexity. Polar residues predominate over residues 334–355 (GRSQTSQAVTGGHTQIQAGSHT). Residues 374 to 385 (QGQTQTQPGSGQ) are compositionally biased toward low complexity. Composition is skewed to polar residues over residues 403–420 (QAQT…WSST) and 460–473 (LHTS…QDAA).

It belongs to the S100-fused protein family. Homodimer. As to expression, expressed in the basal skin layer (at protein level). Squamous epithelia cell-specific. Expressed in the esophagus (periphery of the cells of the granular and the upper spinous layers), foreskin (granular and lower cornified cells), scalp skin (granular layer), inner root sheath of the hair follicle and in primary keratinocytes (at protein level). Expressed in the squamous epithelium of the cervix, esophagus, foreskin and larynx. Expressed in the fetal bladder and scalp skin. Expressed at very low levels in the lung, kidney, uterus, skeletal muscle, heart and fetal brain. Undetectable or barely detectable in esophageal and oral squamous cell carcinoma compared with the matched adjacent normal esophageal mucosa. Undetectable or barely detectable in larynx and esophagus from patients with pH-documented laryngopharyngeal reflux (LPR).

Its subcellular location is the cytoplasm. In terms of biological role, promotes cell proliferation, G1/S cell cycle progression and induces expression of the cell cycle regulator CCND1. Regulates proliferation induced by pro-inflammatory cytokine response via activation of NFKB1 and PI3K/AKT signaling pathways. This is Cornulin (CRNN) from Homo sapiens (Human).